Reading from the N-terminus, the 565-residue chain is NAD-dependent malic enzyme (565 aa).

Y104 serves as the catalytic Proton donor. An NAD(+)-binding site is contributed by R157. K175 acts as the Proton acceptor in catalysis. Positions 246, 247, and 270 each coordinate a divalent metal cation. NAD(+) is bound by residues D270 and N418.

The protein belongs to the malic enzymes family. In terms of assembly, homotetramer. The cofactor is Mg(2+). It depends on Mn(2+) as a cofactor.

It catalyses the reaction (S)-malate + NAD(+) = pyruvate + CO2 + NADH. The catalysed reaction is oxaloacetate + H(+) = pyruvate + CO2. This Escherichia coli O139:H28 (strain E24377A / ETEC) protein is NAD-dependent malic enzyme.